A 189-amino-acid chain; its full sequence is Inosine triphosphate pyrophosphatase (189 aa).

Residue 8-13 participates in ITP binding; sequence TGNANK. Position 39 (glutamate 39) interacts with Mg(2+). Residues lysine 51, 67–68, lysine 84, 143–146, lysine 167, and 172–173 each bind ITP; these read DT, FGWD, and HR.

It belongs to the HAM1 NTPase family. In terms of assembly, homodimer. Mg(2+) is required as a cofactor. Requires Mn(2+) as cofactor.

The protein resides in the cytoplasm. The protein localises to the nucleus. It catalyses the reaction ITP + H2O = IMP + diphosphate + H(+). The catalysed reaction is dITP + H2O = dIMP + diphosphate + H(+). The enzyme catalyses XTP + H2O = XMP + diphosphate + H(+). In terms of biological role, pyrophosphatase that hydrolyzes non-canonical purine nucleotides such as inosine triphosphate (ITP), deoxyinosine triphosphate (dITP) or xanthosine 5'-triphosphate (XTP) to their respective monophosphate derivatives. The enzyme does not distinguish between the deoxy- and ribose forms. Probably excludes non-canonical purines from RNA and DNA precursor pools, thus preventing their incorporation into RNA and DNA and avoiding chromosomal lesions. In Cryptococcus neoformans var. neoformans serotype D (strain JEC21 / ATCC MYA-565) (Filobasidiella neoformans), this protein is Inosine triphosphate pyrophosphatase.